We begin with the raw amino-acid sequence, 4011 residues long: Hybrid PKS-NRPS synthetase mycA (4011 aa).

The Ketosynthase family 3 (KS3) domain maps to 12 to 451; it reads NEPIAIIGSA…GANAHVILEN (440 aa). Active-site for beta-ketoacyl synthase activity residues include Cys185, His324, and His373. The acyl transferase (AT) domain stretch occupies residues 576 to 903; it reads VFTGQGAQWA…PYTGTLSRGS (328 aa). Residues 977 to 1113 are N-terminal hotdog fold; sequence NPLLGRRIPD…GRVIVTLAGT (137 aa). Residues 977–1290 enclose the PKS/mFAS DH domain; that stretch reads NPLLGRRIPD…ITPLATRTGQ (314 aa). The segment at 978–1287 is dehydratase (DH) domain; sequence PLLGRRIPDG…GVRITPLATR (310 aa). His1009 (proton acceptor; for dehydratase activity) is an active-site residue. The segment at 1135–1290 is C-terminal hotdog fold; sequence TAEVREDEFY…ITPLATRTGQ (156 aa). Asp1195 serves as the catalytic Proton donor; for dehydratase activity. The methyltransferase (MT) domain stretch occupies residues 1434–1626; it reads YYVEALGIRE…FSGIDTITPE (193 aa). The tract at residues 2138–2311 is ketoreductase (KR)domain; it reads TYVLFGLTSD…AASVLHLGAV (174 aa). Residues 2429 to 2504 enclose the Carrier 1 domain; the sequence is DSFLQKLQIM…DLVAFAHEKL (76 aa). The residue at position 2464 (Ser2464) is an O-(pantetheine 4'-phosphoryl)serine. Residues 2519–2607 are disordered; that stretch reads AAAAAAAERS…PREQDVERTA (89 aa). Positions 2559–2578 are enriched in polar residues; sequence PASSSTGSDHPTSVTSSGHT. The interval 2604-2975 is condensation; that stretch reads ERTAPMSLGQ…KPDSTLGSAP (372 aa). The tract at residues 3009–3414 is adenylation; the sequence is IIQRNPDTIA…GELEILGRID (406 aa). The disordered stretch occupies residues 3525-3544; it reads AKEEEEEKRPNGSSAAPLTQ. Over residues 3535-3544 the composition is skewed to polar residues; the sequence is NGSSAAPLTQ. The Carrier 2 domain maps to 3541–3621; the sequence is PLTQQELQLR…AMAAAVHDAA (81 aa). O-(pantetheine 4'-phosphoryl)serine is present on Ser3581. Residues 3671 to 3978 form a reductase-like region; it reads VVILTGATGF…RTVPLGQWIE (308 aa).

It in the C-terminal section; belongs to the NRP synthetase family.

It carries out the reaction L-leucine + 8 malonyl-CoA + 4 S-adenosyl-L-methionine + ATP + 9 NADPH + 12 H(+) = (5S)-5-(2-methylpropyl)-3-[(2E,6R,8E,10E,12E)-6,8,10,12-tetramethyltetradeca-2,8,10,12-tetraenoyl]-2,5-dihydro-1H-pyrrol-2-one + AMP + 4 S-adenosyl-L-homocysteine + 8 CO2 + diphosphate + 9 NADP(+) + 8 CoA + 7 H2O. It participates in mycotoxin biosynthesis. Functionally, hybrid PKS-NRPS synthetase; part of the gene cluster that mediates the biosynthesis of myceliothermophins, mycotoxins that contain a trans-fused decalin ring system connected to a conjugated 3-pyrrolin-2-one moiety and that have potential anti-tumor properties. The polyketide synthase module (PKS) of the PKS-NRPS mycA is responsible for the synthesis of the octaketide backbone. The downstream nonribosomal peptide synthetase (NRPS) module then amidates the carboxyl end of the octaketide with a leucine. A reductase-like domain (R) at the C-terminus catalyzes the reductive release of the polyketide-amino acid intermediate. Because mycA lacks a designated enoylreductase (ER) domain, the required activity is provided the enoyl reductase mycC. Following mycA-catalyzed construction and release of aminoacyl polyketide aldehyde, Knoevenagel condensation yields the expected ketone. This C18 keto acyclic precursor is the substrate of the Diels-Alderase mycB, that catalyzes the Diels-Alder cycloaddition to produce myceliothermophin E. A yet unknown oxygenase involved in the production of myceliothermophin A, via substitution with a hydroxyl group at the C21, has still to be identified. The polypeptide is Hybrid PKS-NRPS synthetase mycA (Thermothelomyces thermophilus (strain ATCC 42464 / BCRC 31852 / DSM 1799) (Sporotrichum thermophile)).